Here is a 393-residue protein sequence, read N- to C-terminus: ATP phosphoribosyltransferase regulatory subunit (393 aa).

The protein belongs to the class-II aminoacyl-tRNA synthetase family. HisZ subfamily. As to quaternary structure, heteromultimer composed of HisG and HisZ subunits.

Its subcellular location is the cytoplasm. The protein operates within amino-acid biosynthesis; L-histidine biosynthesis; L-histidine from 5-phospho-alpha-D-ribose 1-diphosphate: step 1/9. In terms of biological role, required for the first step of histidine biosynthesis. May allow the feedback regulation of ATP phosphoribosyltransferase activity by histidine. This Chromohalobacter salexigens (strain ATCC BAA-138 / DSM 3043 / CIP 106854 / NCIMB 13768 / 1H11) protein is ATP phosphoribosyltransferase regulatory subunit.